The chain runs to 228 residues: MGQKVHPIGIRLGIVKEHTSVWYADGRTYADYLLADLNVREYLQDKLKSASVSRIDIHRPAQTARITIHTARPGIVIGKKGEDVEKLRQDLTKQMGVPVHINIEEIRKPELDGMLVAQSVAQQLERRVMFRRAMKRAVQNAMRIGAKGIKIQVSGRLGGAEIARTEWYREGRVPLHTLRADIDYATYEAHTTYGVIGVKVWIFKGEVIGGRQEELKPQAPAPRKKAAK.

The KH type-2 domain occupies 39–107 (VREYLQDKLK…PVHINIEEIR (69 aa)).

This sequence belongs to the universal ribosomal protein uS3 family. In terms of assembly, part of the 30S ribosomal subunit. Forms a tight complex with proteins S10 and S14.

Functionally, binds the lower part of the 30S subunit head. Binds mRNA in the 70S ribosome, positioning it for translation. This is Small ribosomal subunit protein uS3 from Pseudomonas fluorescens (strain ATCC BAA-477 / NRRL B-23932 / Pf-5).